The following is a 263-amino-acid chain: MKKIHPSAVIEEGAQLGDDVVIEAYAYVSKDAKIGNNVVIKQGARILSDTTIGDHSRVFSYAIVGDIPQDISYKEEQKSGVVIGKNATIREFATINSGTAKGDGFTRIGDNAFIMAYCHIAHDCLLGNNIILANNATLAGHVELGDFTVVGGLTPIHQFVKVGEGCMIAGASALSQDIVPFCLAEGNRASIRSLNLVGIRRRFDKDEVDRLSRAFKTLFRQGDLKENAKNLLENQESENVKKMCHFILETKRGIPVYRGKNNA.

It belongs to the transferase hexapeptide repeat family. LpxA subfamily. Homotrimer.

Its subcellular location is the cytoplasm. It catalyses the reaction a (3R)-hydroxyacyl-[ACP] + UDP-N-acetyl-alpha-D-glucosamine = a UDP-3-O-[(3R)-3-hydroxyacyl]-N-acetyl-alpha-D-glucosamine + holo-[ACP]. It participates in glycolipid biosynthesis; lipid IV(A) biosynthesis; lipid IV(A) from (3R)-3-hydroxytetradecanoyl-[acyl-carrier-protein] and UDP-N-acetyl-alpha-D-glucosamine: step 1/6. Its function is as follows. Involved in the biosynthesis of lipid A, a phosphorylated glycolipid that anchors the lipopolysaccharide to the outer membrane of the cell. The chain is Acyl-[acyl-carrier-protein]--UDP-N-acetylglucosamine O-acyltransferase from Campylobacter jejuni subsp. jejuni serotype O:2 (strain ATCC 700819 / NCTC 11168).